The sequence spans 361 residues: 3-dehydroquinate synthase (361 aa).

Residues 72–77 (SGEKEK), 130–131 (TT), K142, and K151 each bind NAD(+). Zn(2+) is bound by residues E184, H247, and H264.

This sequence belongs to the sugar phosphate cyclases superfamily. Dehydroquinate synthase family. Co(2+) is required as a cofactor. Zn(2+) serves as cofactor. It depends on NAD(+) as a cofactor.

The protein resides in the cytoplasm. The catalysed reaction is 7-phospho-2-dehydro-3-deoxy-D-arabino-heptonate = 3-dehydroquinate + phosphate. The protein operates within metabolic intermediate biosynthesis; chorismate biosynthesis; chorismate from D-erythrose 4-phosphate and phosphoenolpyruvate: step 2/7. In terms of biological role, catalyzes the conversion of 3-deoxy-D-arabino-heptulosonate 7-phosphate (DAHP) to dehydroquinate (DHQ). This chain is 3-dehydroquinate synthase, found in Bacillus cereus (strain AH820).